Consider the following 548-residue polypeptide: Aspergilol synthase AuAP450 (548 aa).

A helical membrane pass occupies residues 38–58 (PQLVITTLGALLLAAFYLLPS). Cys489 is a heme binding site.

It belongs to the cytochrome P450 family. Heme is required as a cofactor.

The protein localises to the membrane. Its pathway is secondary metabolite biosynthesis; terpenoid biosynthesis. Its function is as follows. Cytochrome P450 monooxygenase; part of the gene cluster that mediates the biosynthesis of aspergiltriene A, aspergildienes A-D and aspergilols A-D. The bifunctional terpene synthase AuAS converts DMAPP and IPP into sesterterpenes. The C-terminal prenyltransferase (PT) domain of AuAS catalyzes formation of GFPP, whereas the N-terminal terpene cyclase (TC) domain catalyzes the cyclization of GFPP into 5 distinct sesterterpenes: aspergiltriene A, aspergildiene A, aspergildiene B, aspergildiene C and aspergildiene D. The cytochrome P450 monooxygenase AP450 then hydroxylates the aspergildienes A, B, C and D to yield the corresponding sesterterpene alcohols, aspergilols A-D. The polypeptide is Aspergilol synthase AuAP450 (Aspergillus ustus).